The primary structure comprises 560 residues: Hydroxyisourate hydrolase (560 aa).

The N-terminal stretch at 1 to 31 is a signal peptide; it reads MMEPPQTRLMINVFIVSFLALLVNLVVGVLG. The Peroxisomal segment spans residues 32-517; the sequence is ADNYSRDDFP…LEQDPITCSK (486 aa). The N-linked (GlcNAc...) asparagine glycan is linked to asparagine 34. A beta-D-glucoside contacts are provided by residues glutamine 54 and 198 to 199; that span reads NE. Glutamate 199 (proton donor) is an active-site residue. An intrachain disulfide couples cysteine 218 to cysteine 223. Residues asparagine 226 and asparagine 231 are each glycosylated (N-linked (GlcNAc...) asparagine). An a beta-D-glucoside-binding site is contributed by tyrosine 343. N-linked (GlcNAc...) asparagine glycosylation is present at asparagine 347. Position 408 (glutamate 408) interacts with a beta-D-glucoside. Catalysis depends on glutamate 408, which acts as the Nucleophile. Asparagine 416 is a glycosylation site (N-linked (GlcNAc...) asparagine). Phenylalanine 467 contributes to the a beta-D-glucoside binding site. An N-linked (GlcNAc...) asparagine glycan is attached at asparagine 489. Residues 518 to 538 form a helical membrane-spanning segment; sequence SPIIFSKISKWVLASLLFLIQ. Residues 539-560 are Cytoplasmic-facing; that stretch reads HKIKFMWREPLPGQIPLKLVMF.

It belongs to the glycosyl hydrolase 1 family. Monomer. As to expression, highly expressed in uninfected root nodules. Detected in leaves, stems and roots.

Its subcellular location is the peroxisome membrane. It carries out the reaction 5-hydroxyisourate + H2O = 5-hydroxy-2-oxo-4-ureido-2,5-dihydro-1H-imidazole-5-carboxylate + H(+). The protein operates within purine metabolism; urate degradation; (S)-allantoin from urate: step 2/3. Functionally, involved in the conversion of hydroxyisourate to ureides such as allantoin, the major form of nitrogen transport in legumes. This Glycine max (Soybean) protein is Hydroxyisourate hydrolase (HIUH).